The primary structure comprises 130 residues: Small ribosomal subunit protein uS8 (130 aa).

This sequence belongs to the universal ribosomal protein uS8 family. As to quaternary structure, part of the 30S ribosomal subunit. Contacts proteins S5 and S12.

One of the primary rRNA binding proteins, it binds directly to 16S rRNA central domain where it helps coordinate assembly of the platform of the 30S subunit. This is Small ribosomal subunit protein uS8 from Shigella boydii serotype 18 (strain CDC 3083-94 / BS512).